Reading from the N-terminus, the 514-residue chain is Putative fumarate hydratase class I (514 aa).

Residues cysteine 62, cysteine 187, and cysteine 274 each contribute to the [4Fe-4S] cluster site.

It belongs to the class-I fumarase family. Homodimer. It depends on [4Fe-4S] cluster as a cofactor.

It catalyses the reaction (S)-malate = fumarate + H2O. It participates in carbohydrate metabolism; tricarboxylic acid cycle; (S)-malate from fumarate: step 1/1. Its function is as follows. Catalyzes the reversible hydration of fumarate to (S)-malate. This Geobacillus stearothermophilus (Bacillus stearothermophilus) protein is Putative fumarate hydratase class I (fumA).